A 626-amino-acid polypeptide reads, in one-letter code: tRNA uridine 5-carboxymethylaminomethyl modification enzyme MnmG (626 aa).

13-18 (GGGHAG) is a binding site for FAD. 273-287 (GPRYCPSIEDKIHRF) is a binding site for NAD(+).

The protein belongs to the MnmG family. Homodimer. Heterotetramer of two MnmE and two MnmG subunits. It depends on FAD as a cofactor.

The protein localises to the cytoplasm. Its function is as follows. NAD-binding protein involved in the addition of a carboxymethylaminomethyl (cmnm) group at the wobble position (U34) of certain tRNAs, forming tRNA-cmnm(5)s(2)U34. In Acinetobacter baylyi (strain ATCC 33305 / BD413 / ADP1), this protein is tRNA uridine 5-carboxymethylaminomethyl modification enzyme MnmG.